The primary structure comprises 429 residues: 3-phosphoshikimate 1-carboxyvinyltransferase (429 aa).

The 3-phosphoshikimate site is built by K23, S24, and R28. Residue K23 participates in phosphoenolpyruvate binding. Phosphoenolpyruvate contacts are provided by G95 and R123. 3-phosphoshikimate contacts are provided by S168, Q170, D316, and K343. Q170 lines the phosphoenolpyruvate pocket. D316 acts as the Proton acceptor in catalysis. Phosphoenolpyruvate-binding residues include R347 and R389.

Belongs to the EPSP synthase family. As to quaternary structure, monomer.

The protein localises to the cytoplasm. The catalysed reaction is 3-phosphoshikimate + phosphoenolpyruvate = 5-O-(1-carboxyvinyl)-3-phosphoshikimate + phosphate. Its pathway is metabolic intermediate biosynthesis; chorismate biosynthesis; chorismate from D-erythrose 4-phosphate and phosphoenolpyruvate: step 6/7. Its function is as follows. Catalyzes the transfer of the enolpyruvyl moiety of phosphoenolpyruvate (PEP) to the 5-hydroxyl of shikimate-3-phosphate (S3P) to produce enolpyruvyl shikimate-3-phosphate and inorganic phosphate. This chain is 3-phosphoshikimate 1-carboxyvinyltransferase, found in Bacillus cereus (strain ATCC 10987 / NRS 248).